The following is an 878-amino-acid chain: Valine--tRNA ligase (878 aa).

The 'HIGH' region motif lies at 45–55; it reads PNVTGQLHMGH. The short motif at 524–528 is the 'KMSKS' region element; that stretch reads KMSKS. Lysine 527 is a binding site for ATP. The stretch at 804-871 forms a coiled coil; sequence PLKDLIDLEK…REKEVLEQRI (68 aa).

It belongs to the class-I aminoacyl-tRNA synthetase family. ValS type 1 subfamily. As to quaternary structure, monomer.

It is found in the cytoplasm. It catalyses the reaction tRNA(Val) + L-valine + ATP = L-valyl-tRNA(Val) + AMP + diphosphate. In terms of biological role, catalyzes the attachment of valine to tRNA(Val). As ValRS can inadvertently accommodate and process structurally similar amino acids such as threonine, to avoid such errors, it has a 'posttransfer' editing activity that hydrolyzes mischarged Thr-tRNA(Val) in a tRNA-dependent manner. The protein is Valine--tRNA ligase of Carboxydothermus hydrogenoformans (strain ATCC BAA-161 / DSM 6008 / Z-2901).